The primary structure comprises 285 residues: MDPEEQLESTEGVPAKSLSLIKHILLVLSGKGGVGKSSVTTQTALTLCGMGYNVGVLDIDLTGPSLPRMFGIEDSSIYQSADGWMPIPVETNGKGKLCVVSLGFLLGSRGTSVVWRGPKKTSMIRQFIKDVTWGELDYLLIDTPPGTSDEHISIAEELRFTNPDGAIVVTTPQGVATADVKKEINFCRKVNLRILGVIENMSGFVCPYCTECTNIFSKGGGESLAKQFDVPYLGNIPIDPKFVDLIENQKKMEGTLVELYEKSSLYPIYLEIMKKVQEESSKPQE.

An ATP-binding site is contributed by 30-37; that stretch reads GKGGVGKS. [4Fe-4S] cluster is bound by residues Cys-206 and Cys-209.

Belongs to the Mrp/NBP35 ATP-binding proteins family. NUBP2/CFD1 subfamily. Heterotetramer of 2 NBP35 and 2 CFD1 chains. [4Fe-4S] cluster is required as a cofactor.

The protein resides in the cytoplasm. In terms of biological role, component of the cytosolic iron-sulfur (Fe/S) protein assembly (CIA) machinery. Required for maturation of extramitochondrial Fe-S proteins. The NBP35-CFD1 heterotetramer forms a Fe-S scaffold complex, mediating the de novo assembly of an Fe-S cluster and its transfer to target apoproteins. Required for biogenesis and export of both ribosomal subunits, which may reflect a role in assembly of the Fe/S clusters in RLI1, a protein which performs rRNA processing and ribosome export. In Candida glabrata (strain ATCC 2001 / BCRC 20586 / JCM 3761 / NBRC 0622 / NRRL Y-65 / CBS 138) (Yeast), this protein is Cytosolic Fe-S cluster assembly factor CFD1.